Reading from the N-terminus, the 119-residue chain is Small ribosomal subunit protein uS13m (119 aa).

The protein belongs to the universal ribosomal protein uS13 family. Component of the mitochondrial small ribosomal subunit (mt-SSU). Mature N.crassa 74S mitochondrial ribosomes consist of a small (37S) and a large (54S) subunit. The 37S small subunit contains a 16S ribosomal RNA (16S mt-rRNA) and 32 different proteins. The 54S large subunit contains a 23S rRNA (23S mt-rRNA) and 42 different proteins.

It is found in the mitochondrion. Its function is as follows. Component of the mitochondrial ribosome (mitoribosome), a dedicated translation machinery responsible for the synthesis of mitochondrial genome-encoded proteins, including at least some of the essential transmembrane subunits of the mitochondrial respiratory chain. The mitoribosomes are attached to the mitochondrial inner membrane and translation products are cotranslationally integrated into the membrane. The protein is Small ribosomal subunit protein uS13m (sws2) of Neurospora crassa (strain ATCC 24698 / 74-OR23-1A / CBS 708.71 / DSM 1257 / FGSC 987).